We begin with the raw amino-acid sequence, 133 residues long: Arginine decarboxylase proenzyme (133 aa).

Ser-81 serves as the catalytic Schiff-base intermediate with substrate; via pyruvic acid. At Ser-81 the chain carries Pyruvic acid (Ser); by autocatalysis. Catalysis depends on His-86, which acts as the Proton acceptor; for processing activity. The Proton donor; for catalytic activity role is filled by Cys-101.

The protein belongs to the prokaryotic AdoMetDC family. Type 1 subfamily. In terms of assembly, heterooctamer of four alpha and four beta chains arranged as a tetramer of alpha/beta heterodimers. Requires pyruvate as cofactor. Is synthesized initially as an inactive proenzyme. Formation of the active enzyme involves a self-maturation process in which the active site pyruvoyl group is generated from an internal serine residue via an autocatalytic post-translational modification. Two non-identical subunits are generated from the proenzyme in this reaction, and the pyruvate is formed at the N-terminus of the alpha chain, which is derived from the carboxyl end of the proenzyme. The post-translation cleavage follows an unusual pathway, termed non-hydrolytic serinolysis, in which the side chain hydroxyl group of the serine supplies its oxygen atom to form the C-terminus of the beta chain, while the remainder of the serine residue undergoes an oxidative deamination to produce ammonia and the pyruvoyl group blocking the N-terminus of the alpha chain.

It carries out the reaction L-arginine + H(+) = agmatine + CO2. It participates in amine and polyamine biosynthesis; agmatine biosynthesis; agmatine from L-arginine: step 1/1. Functionally, specifically catalyzes the decarboxylation of L-arginine to agmatine. Has no S-adenosylmethionine decarboxylase (AdoMetDC) activity. In Pyrobaculum arsenaticum (strain DSM 13514 / JCM 11321 / PZ6), this protein is Arginine decarboxylase proenzyme.